The sequence spans 601 residues: Tripeptidyl-peptidase SED4 (601 aa).

The N-terminal stretch at 1–22 is a signal peptide; that stretch reads MVSFTLRAIGACLVSLPALVTA. Positions 23–202 are cleaved as a propeptide — removed in mature form; it reads APTSHISGDF…SVFTSDLEIT (180 aa). Residues Asn-210 and Asn-281 are each glycosylated (N-linked (GlcNAc...) asparagine). In terms of domain architecture, Peptidase S53 spans 212–601; it reads TITPDCIRDL…ETLSKLVLQY (390 aa). Catalysis depends on charge relay system residues Glu-288 and Asp-292. Asn-323 carries an N-linked (GlcNAc...) asparagine glycan. Residue Ser-504 is the Charge relay system of the active site. Residues Asp-546 and Ile-547 each coordinate Ca(2+). Asn-575 carries an N-linked (GlcNAc...) asparagine glycan. 2 residues coordinate Ca(2+): Gly-579 and Asp-581.

Requires Ca(2+) as cofactor.

The protein localises to the secreted. Its subcellular location is the extracellular space. It catalyses the reaction Release of an N-terminal tripeptide from a polypeptide.. Secreted tripeptidyl-peptidase which degrades proteins at acidic pHs and is involved in virulence. The polypeptide is Tripeptidyl-peptidase SED4 (SED4) (Arthroderma otae (strain ATCC MYA-4605 / CBS 113480) (Microsporum canis)).